A 750-amino-acid chain; its full sequence is Rho GTPase-activating protein 9 (750 aa).

The SH3 domain maps to 22-88; it reads PRGSQLCALY…PAAYMIEESI (67 aa). Disordered regions lie at residues 120–187 and 242–319; these read ALPS…LMSE and WKPP…LLDD. Polar residues predominate over residues 163-180; that stretch reads RSLSQEDLPSEASASTAG. Residues 213–247 form the WW domain; it reads LQRLDAWEQHLDPNSGRCFYINSLTGCKSWKPPRR. 2 stretches are compositionally biased toward polar residues: residues 251 to 270 and 291 to 300; these read ETNPGSMEGTQTLKRNNDVL and GSLSLSQRTS. A compositionally biased stretch (low complexity) spans 301–317; it reads QLDPPALQAPRPLPQLL. Residues 322–435 form the PH domain; sequence EVEKSGLLNM…WHRALRTVIE (114 aa). Lipid binding stretches follow at residues 342 to 345, 397 to 399, and 432 to 669; these read RKNW, SSR, and TVIE…CLSQ. Residues 446–462 are compositionally biased toward basic and acidic residues; the sequence is EAPTGRDQGSGDRENPL. The disordered stretch occupies residues 446–488; it reads EAPTGRDQGSGDRENPLELRLSGSGPAELSAGEDEEEESELVS. S475 is subject to Phosphoserine. Residues 476–485 are compositionally biased toward acidic residues; sequence AGEDEEEESE. Residue S500 is modified to Phosphoserine. Residues 542-749 form the Rho-GAP domain; that stretch reads CQLESLCQRE…LMLTNFTSLF (208 aa).

Interacts with FASLG. Predominantly expressed in peripheral blood leukocytes, spleen, and thymus.

Its function is as follows. GTPase activator for the Rho-type GTPases by converting them to an inactive GDP-bound state. Has a substantial GAP activity toward CDC42 and RAC1 and less toward RHOA. Has a role in regulating adhesion of hematopoietic cells to the extracellular matrix. Binds phosphoinositides, and has the highest affinity for phosphatidylinositol 3,4,5-trisphosphate, followed by phosphatidylinositol 3,4-bisphosphate and phosphatidylinositol 4,5-bisphosphate. This is Rho GTPase-activating protein 9 (ARHGAP9) from Homo sapiens (Human).